An 859-amino-acid chain; its full sequence is Cadherin-related family member 1 (859 aa).

An N-terminal signal peptide occupies residues 1–21 (MRRGPRVALVLGLLRIYLAQA). At 22 to 701 (NFAPHFFDNG…LIQTKDNPMK (680 aa)) the chain is on the extracellular side. Cadherin domains lie at 36–135 (NGNM…APRF), 136–247 (IQEP…APIF), 248–354 (VGTP…PPTF), 360–473 (PQNK…VPKF), 474–577 (TSHY…YPQF), and 569–691 (DVND…MAAF). N-linked (GlcNAc...) asparagine glycans are attached at residues asparagine 58 and asparagine 89. A glycan (N-linked (GlcNAc...) asparagine) is linked at asparagine 288. A helical transmembrane segment spans residues 702-722 (AVGVLAGVMAIVVAITVLIST). Residues 723–859 (ATFWRNKKSN…KKSLDNKAYI (137 aa)) lie on the Cytoplasmic side of the membrane. Positions 793–838 (PALPPPPKMASSMVAQQTVPTVSGSLTPQPSPQLPTPKTLGGPVQS) are disordered. Over residues 805 to 816 (MVAQQTVPTVSG) the composition is skewed to polar residues.

In terms of assembly, interacts with PROM1. In terms of processing, undergoes proteolytic cleavage; produces a soluble 95 kDa N-terminal fragment and a 25 kDa cell-associated C-terminal fragment. As to expression, expressed in cone and rod photoreceptor cells (at protein level). Expressed in photoreceptor cells of the outer nuclear layer of the retina. Expressed in mitral and tufted cells in the olfactory bulb.

It is found in the cell membrane. Its function is as follows. Potential calcium-dependent cell-adhesion protein. May be required for the structural integrity of the outer segment (OS) of photoreceptor cells. The chain is Cadherin-related family member 1 (Cdhr1) from Mus musculus (Mouse).